A 100-amino-acid polypeptide reads, in one-letter code: Small ribosomal subunit protein bS18c (100 aa).

The tract at residues 81–100 (KQFERTESTPRTTGPRTRKK) is disordered. The span at 89 to 100 (TPRTTGPRTRKK) shows a compositional bias: low complexity.

This sequence belongs to the bacterial ribosomal protein bS18 family. In terms of assembly, part of the 30S ribosomal subunit.

Its subcellular location is the plastid. It localises to the chloroplast. In Nandina domestica (Heavenly bamboo), this protein is Small ribosomal subunit protein bS18c.